The sequence spans 827 residues: Ribosome biogenesis protein ERB1 (827 aa).

Residues 1 to 129 (MVHSKKDKSV…DFSDDNDTRP (129 aa)) form a disordered region. Over residues 7–18 (DKSVMKHSDIKK) the composition is skewed to basic and acidic residues. Residues 45-60 (CDSDDDEEFQSAEEEV) show a composition bias toward acidic residues. Residues 61-77 (LSSGSESSSKEGSTPGS) show a composition bias toward low complexity. Composition is skewed to acidic residues over residues 81–99 (GSDE…DEDA) and 108–124 (EEGD…FSDD). Residues 291–409 (RFVPSKHEAK…LRKVPGYGES (119 aa)) form a required for interaction with NOP7 region. Residues 409 to 445 (SVRERFERSLDLYLAPRVRKNKLNIDPESLIPELPSP) form a required for interaction with YTM1 region. WD repeat units follow at residues 461–500 (GHKG…EVYK), 509–549 (NQDD…FEVE), 657–695 (KSKG…LVKK), 698–737 (PGAR…TPYK), 741–780 (YHEK…DMMK), and 796–827 (VNSL…LWTT).

This sequence belongs to the WD repeat BOP1/ERB1 family. In terms of assembly, component of the NOP7 complex, composed of ERB1, NOP7 and YTM1. The complex is held together by ERB1, which interacts with NOP7 via its N-terminal domain and with YTM1 via a high-affinity interaction between the seven-bladed beta-propeller domains of the 2 proteins. The NOP7 complex associates with the 66S pre-ribosome.

It is found in the nucleus. The protein localises to the nucleolus. The protein resides in the nucleoplasm. Component of the NOP7 complex, which is required for maturation of the 25S and 5.8S ribosomal RNAs and formation of the 60S ribosome. The polypeptide is Ribosome biogenesis protein ERB1 (Eremothecium gossypii (strain ATCC 10895 / CBS 109.51 / FGSC 9923 / NRRL Y-1056) (Yeast)).